Consider the following 397-residue polypeptide: Galactokinase (397 aa).

The segment at 1–27 (MGEAVGEPSASGSGSCTGRSRRGCGRR) is disordered. The span at 9–18 (SASGSGSCTG) shows a compositional bias: low complexity. 36-39 (EHTD) lines the substrate pocket. Residues Ser-69 and 124 to 130 (GAGLSSS) each bind ATP. Ser-130 and Glu-161 together coordinate Mg(2+). Asp-173 (proton acceptor) is an active-site residue. A substrate-binding site is contributed by Tyr-225.

This sequence belongs to the GHMP kinase family. GalK subfamily.

The protein localises to the cytoplasm. The catalysed reaction is alpha-D-galactose + ATP = alpha-D-galactose 1-phosphate + ADP + H(+). It participates in carbohydrate metabolism; galactose metabolism. Catalyzes the transfer of the gamma-phosphate of ATP to D-galactose to form alpha-D-galactose-1-phosphate (Gal-1-P). The polypeptide is Galactokinase (Streptomyces lividans).